A 499-amino-acid polypeptide reads, in one-letter code: Aldehyde dehydrogenase 1 (499 aa).

NAD(+)-binding positions include 164 to 166, 164 to 167, 190 to 193, 223 to 224, 243 to 244, 243 to 248, and 266 to 268; these read IPW, IPWN, KPAE, GS, GSTKVG, and ELG. Catalysis depends on Glu266, which acts as the Proton acceptor. The Nucleophile role is filled by Cys300. NAD(+) is bound by residues 346–350 and 397–399; these read QQYEK and EIF.

The protein belongs to the aldehyde dehydrogenase family. Homotetramer. As to expression, expressed in flowers and disk florets.

The catalysed reaction is an aldehyde + NAD(+) + H2O = a carboxylate + NADH + 2 H(+). The enzyme catalyses an aldehyde + NADP(+) + H2O = a carboxylate + NADPH + 2 H(+). It carries out the reaction octanal + NADP(+) + H2O = octanoate + NADPH + 2 H(+). It catalyses the reaction (1R,3R)-chrysanthemal + NAD(+) + H2O = (1R,3R)-chrysanthemate + NADH + 2 H(+). The catalysed reaction is (1R,3R)-chrysanthemal + NADP(+) + H2O = (1R,3R)-chrysanthemate + NADPH + 2 H(+). The enzyme catalyses (E)-hept-2-enal + NADP(+) + H2O = (E)-hept-2-enoate + NADPH + 2 H(+). It carries out the reaction dodecanal + NADP(+) + H2O = dodecanoate + NADPH + 2 H(+). It catalyses the reaction citral + NADP(+) + H2O = 3,7-dimethylocta-2,6-dienoate + NADPH + 2 H(+). The catalysed reaction is perillyl aldehyde + NADP(+) + H2O = perillate + NADPH + 2 H(+). The enzyme catalyses (2E,6E)-farnesal + NADP(+) + H2O = (2E,6E)-farnesoate + NADPH + 2 H(+). It carries out the reaction (S)-(-)-citronellal + NADP(+) + H2O = (S)-(-)-citronellate + NADPH + 2 H(+). Its pathway is isoprenoid biosynthesis. In terms of biological role, component of the monoterpenoid pyrethrins biosynthesis; pyrethrins are widely used plant-derived pesticide. Mediates the conversion of trans-chrysanthemal into trans-chrysanthemic acid. Can also use octanal, hept-2-enal, dodecanal, citral, farnesal, citronellal and perillyl aldehyde as substrates. This is Aldehyde dehydrogenase 1 from Tanacetum cinerariifolium (Dalmatian daisy).